A 141-amino-acid polypeptide reads, in one-letter code: Hemoglobin subunit alpha (141 aa).

The Globin domain occupies 1–141 (VLSAADKTNV…VSTVLTSKYR (141 aa)). Phosphoserine is present on Ser3. Lys7 carries the post-translational modification N6-succinyllysine. Phosphothreonine is present on Thr8. Residue Lys11 is modified to N6-succinyllysine. An N6-acetyllysine; alternate modification is found at Lys16. N6-succinyllysine; alternate is present on Lys16. The residue at position 24 (Tyr24) is a Phosphotyrosine. Ser35 is modified (phosphoserine). At Lys40 the chain carries N6-succinyllysine. Ser49 is subject to Phosphoserine. His58 serves as a coordination point for O2. His87 provides a ligand contact to heme b. Ser102 is subject to Phosphoserine. Thr108 carries the phosphothreonine modification. 2 positions are modified to phosphoserine: Ser124 and Ser131. Phosphothreonine occurs at positions 134 and 137. A Phosphoserine modification is found at Ser138.

This sequence belongs to the globin family. Heterotetramer of two alpha chains and two beta chains. Red blood cells.

Its function is as follows. Involved in oxygen transport from the lung to the various peripheral tissues. This chain is Hemoglobin subunit alpha, found in Tamiasciurus hudsonicus (American red squirrel).